We begin with the raw amino-acid sequence, 1055 residues long: Inactive exonuclease DIS3L2 (1055 aa).

2 disordered regions span residues 1–109 and 229–249; these read MKSA…SSPE and SAAKPEGTNSPPEKDDKKARQ. Basic residues predominate over residues 17–32; sequence HKKKRNRPQKQNRRSK. Positions 39 to 59 are enriched in basic and acidic residues; sequence EDAHVEESLDGRDSSRSKAKD. Over residues 97-108 the composition is skewed to low complexity; the sequence is PRRSASPLLSSP. Positions 367 to 446 constitute a CSD2 domain; that stretch reads YVQLMPADPR…PQINAILYQN (80 aa). The region spanning 476–824 is the RNB domain; that stretch reads RKDLRDLCVL…VHRALAAALE (349 aa). Mg(2+) contacts are provided by Asp488 and Asp497.

The protein belongs to the RNR ribonuclease family. DIS3L2 subfamily.

Its subcellular location is the cytoplasm. Probable inactive 3'-5'-exoribonuclease. Is unable to complement the growth defect of a yeast mutant lacking RRP44 exonuclease. The chain is Inactive exonuclease DIS3L2 from Arabidopsis thaliana (Mouse-ear cress).